The sequence spans 427 residues: Glutamate-1-semialdehyde 2,1-aminomutase (427 aa).

An N6-(pyridoxal phosphate)lysine modification is found at Lys268.

This sequence belongs to the class-III pyridoxal-phosphate-dependent aminotransferase family. HemL subfamily. It depends on pyridoxal 5'-phosphate as a cofactor.

It is found in the cytoplasm. It carries out the reaction (S)-4-amino-5-oxopentanoate = 5-aminolevulinate. The protein operates within porphyrin-containing compound metabolism; protoporphyrin-IX biosynthesis; 5-aminolevulinate from L-glutamyl-tRNA(Glu): step 2/2. This is Glutamate-1-semialdehyde 2,1-aminomutase from Methanococcus maripaludis (strain C7 / ATCC BAA-1331).